A 2367-amino-acid chain; its full sequence is RNA1 polyprotein (2367 aa).

The Cytoplasmic portion of the chain corresponds to 587–1194 (AKCEDLAVVS…GGRLLLILCS (608 aa)). The SF3 helicase domain maps to 776-940 (ELRTLRNDMA…AGVAFNPHDS (165 aa)). 804 to 811 (GPPGVGKT) serves as a coordination point for ATP. Residues 1195–1215 (CMLLGIACYTFFNALAILIGG) traverse the membrane as a helical segment. Over 1216-1235 (TSVAAGAAAMVDIGACGSTS) the chain is Lumenal. One can recognise a Peptidase C3 domain in the interval 1258 to 1468 (PAVWSEETGH…YVCKFPHIEV (211 aa)). Residues His-1302, Glu-1339, and Cys-1432 each act as for picornain 3C-like protease activity in the active site. One can recognise a RdRp catalytic domain in the interval 1832-1957 (DKMYCCDYSK…GIHPNIESAF (126 aa)).

The protein belongs to the nepoviruses RNA1 polyprotein family. In terms of processing, specific enzymatic cleavages by picornain 3C-like protease in vivo yield mature proteins. Picornain 3C-like protease is autocatalytically processed. Post-translationally, VPg is uridylylated by the polymerase and is covalently linked to the 5'-end of genomic RNA. This uridylylated form acts as a nucleotide-peptide primer for the polymerase.

Its subcellular location is the host endoplasmic reticulum lumen. It localises to the host endoplasmic reticulum membrane. The catalysed reaction is RNA(n) + a ribonucleoside 5'-triphosphate = RNA(n+1) + diphosphate. In terms of biological role, picornain 3C-like protease is a thiol protease that cleaves the P1 and P2 polyproteins. The protein is RNA1 polyprotein of Fragaria vesca (Woodland strawberry).